A 311-amino-acid chain; its full sequence is Protoheme IX farnesyltransferase (311 aa).

The next 8 membrane-spanning stretches (helical) occupy residues 30 to 50 (VVQLIVFCAAIGMLLAVPGWP), 55 to 75 (WGVALAASIGIWLVASAAAAF), 108 to 128 (FAVLLCAAGMAVLWVWVNALT), 129 to 149 (MWLTFATFVGYAVIYTVLLKP), 153 to 173 (QNIVIGGASGAMPPVLGWAAM), 182 to 202 (WILCLIIFLWTPPHFWALALY), 233 to 253 (FVLFAATLLPFVYGMSGWFYL), and 287 to 307 (IWHLSLLFAALLLDHYLGPLL).

This sequence belongs to the UbiA prenyltransferase family. Protoheme IX farnesyltransferase subfamily.

It localises to the cell inner membrane. It carries out the reaction heme b + (2E,6E)-farnesyl diphosphate + H2O = Fe(II)-heme o + diphosphate. Its pathway is porphyrin-containing compound metabolism; heme O biosynthesis; heme O from protoheme: step 1/1. Its function is as follows. Converts heme B (protoheme IX) to heme O by substitution of the vinyl group on carbon 2 of heme B porphyrin ring with a hydroxyethyl farnesyl side group. This is Protoheme IX farnesyltransferase from Methylibium petroleiphilum (strain ATCC BAA-1232 / LMG 22953 / PM1).